Here is a 1790-residue protein sequence, read N- to C-terminus: Atrochrysone carboxylic acid synthase (1790 aa).

An N-terminal acylcarrier protein transacylase domain (SAT) region spans residues 27 to 265 (RDLQDLFRQA…ALPVYGGLCH (239 aa)). A Ketosynthase family 3 (KS3) domain is found at 399–833 (QSKLAIVGMS…GGNTTMILED (435 aa)). Residues cysteine 572, histidine 708, and histidine 751 each act as for beta-ketoacyl synthase activity in the active site. A malonyl-CoA:ACP transacylase (MAT) domain region spans residues 934-1254 (FSFTGQGASH…IAQLYTVGVD (321 aa)). Residues 1323–1475 (QQIVEQVFDT…SLTHLVRDRI (153 aa)) are N-terminal hotdog fold. Positions 1323 to 1634 (QQIVEQVFDT…FHRYRRILLE (312 aa)) constitute a PKS/mFAS DH domain. Histidine 1357 acts as the Proton acceptor; for dehydratase activity in catalysis. Residues 1357 to 1631 (HRMNDCGVAT…GIEFHRYRRI (275 aa)) form a product template (PT) domain region. Positions 1487–1634 (ANRLSHNMAY…FHRYRRILLE (148 aa)) are C-terminal hotdog fold. The active-site Proton donor; for dehydratase activity is aspartate 1545. Positions 1644 to 1667 (NLDDTTETKDISSSTQHSVPVSRQ) are disordered. Polar residues predominate over residues 1654 to 1664 (ISSSTQHSVPV). In terms of domain architecture, Carrier spans 1715–1789 (SSITNRAMQL…DLRNWLEETY (75 aa)). Residue serine 1749 is modified to O-(pantetheine 4'-phosphoryl)serine.

The enzyme catalyses holo-[ACP] + 8 malonyl-CoA + 8 H(+) = atrochrysone carboxyl-[ACP] + 8 CO2 + 8 CoA + 2 H2O. It participates in pigment biosynthesis. In terms of biological role, non-reducing polyketide synthase; part of the gene cluster that mediates the biosynthesis of the bianthraquinone cladofulvin, a conidial pigment not required for virulence but that plays a role in fitness and resistance to environmental stresses including UV light and low-temperature stress. The pathway begins with the synthesis of atrochrysone thioester by the polyketide synthase (PKS) claG. The atrochrysone carboxyl ACP thioesterase claF then breaks the thioester bond and releases the atrochrysone carboxylic acid from claG. This compound is decarboxylated by claH to yield emodin, which is further converted to chrysophanol hydroquinone by the reductase claC and the dehydratase claB. The cytochrome P450 monooxygenase claM then catalyzes the dimerization of nataloe-emodin to cladofulvin. In Passalora fulva (Tomato leaf mold), this protein is Atrochrysone carboxylic acid synthase.